We begin with the raw amino-acid sequence, 1591 residues long: Dicer-like protein 1 (1591 aa).

Basic and acidic residues-rich tracts occupy residues 1-20 and 41-52; these read MEVH…RYDD and SKPRKISERKRA. The tract at residues 1–52 is disordered; sequence MEVHDGLKSPDKAAKSRYDDDRIDQDSEDEAVRLVANPDPSKPRKISERKRA. Residues 115-298 enclose the Helicase ATP-binding domain; that stretch reads LFERAKQKNT…SYERATHELE (184 aa). ATP is bound at residue 128 to 135; sequence LDTGTGKT. A DEAH box motif is present at residues 242-245; that stretch reads DEAH. The Helicase C-terminal domain occupies 439–607; that stretch reads KLIEILAECF…CLSLPKDRIM (169 aa). Positions 639 to 729 constitute a Dicer dsRNA-binding fold domain; it reads SLVVLAEFVA…KSTLAKVLPA (91 aa). Residues 888–1012 enclose the PAZ domain; that stretch reads TTTDRVPYNF…LVLETLLISQ (125 aa). RNase III domains are found at residues 1050 to 1190 and 1243 to 1406; these read IDIA…LTAQ and CSQI…VDTG. Positions 1283, 1392, and 1395 each coordinate Mg(2+). One can recognise a DRBM domain in the interval 1440 to 1514; it reads THITSIITTQ…AKQAVAIYED (75 aa). Zn(2+) contacts are provided by C1452, H1485, C1526, and C1528.

The protein belongs to the helicase family. Dicer subfamily. Mg(2+) is required as a cofactor. The cofactor is Mn(2+).

Dicer-like endonuclease which seems not to be involved in cleaving double-stranded RNA in the RNA interference (RNAi) pathway, contrary to its DCL2 counterpart. This chain is Dicer-like protein 1 (DCL1), found in Pyricularia oryzae (strain 70-15 / ATCC MYA-4617 / FGSC 8958) (Rice blast fungus).